The sequence spans 211 residues: uncharacterized protein (211 aa).

6 helical membrane passes run 21-38 (WYVITLLLVVIYIYASEI), 53-75 (WGMDWFNEIWNALVFHFTNYAAV), 82-104 (TAYLILIGLNIEISMMFAIMGVA), 124-146 (IFYAIVLSAACVVVEIILNAANV), 159-178 (PLLIFLIGYLPFFLVAYWVY), and 188-210 (AVSFGILAIDAVLLIVFAGLMEW).

The protein resides in the cell membrane. This is an uncharacterized protein from Archaeoglobus fulgidus (strain ATCC 49558 / DSM 4304 / JCM 9628 / NBRC 100126 / VC-16).